The chain runs to 1054 residues: SMC5-SMC6 complex localization factor protein 1 (1054 aa).

BRCT domains follow at residues 2–80 and 121–199; these read EDSA…AKSG and PGAF…LLEK. The tract at residues 283-303 is disordered; sequence RHGLENQKETKKKDKNIQRSY. Residues 284-299 are compositionally biased toward basic and acidic residues; it reads HGLENQKETKKKDKNI. Residues 407 to 1054 form an NSE5-like domain; mediates interaction with SLF2 region; the sequence is PRGILNLIEN…MMCQSITELS (648 aa). ANK repeat units follow at residues 802–832, 836–865, and 870–900; these read KGET…DINV, AGWT…EVDL, and DGVT…ELLQ.

Interacts (via BRCT domains) with RAD18 (via C-terminus and phosphorylated form); this interaction is required for efficient repair of UV-induced DNA damage. Interacts (via N-terminus) with SLF2; this interaction links RAD18 to the SMC5-SMC6 complex. Interacts (via BRCT domains) with RAD18; this interaction occurs in a SLF2-independent manner. Interacts with SMC6. In terms of tissue distribution, widely expressed. Expressed in testis. Expressed in spermatocytes.

Its subcellular location is the nucleus. It is found in the cytoplasm. It localises to the cytoskeleton. The protein resides in the microtubule organizing center. The protein localises to the centrosome. Plays a role in the DNA damage response (DDR) pathway by regulating postreplication repair of UV-damaged DNA and genomic stability maintenance. The SLF1-SLF2 complex acts to link RAD18 with the SMC5-SMC6 complex at replication-coupled interstrand cross-links (ICL) and DNA double-strand breaks (DSBs) sites on chromatin during DNA repair in response to stalled replication forks. Promotes the recruitment of SLF2 and the SMC5-SMC6 complex to DNA lesions. In Mus musculus (Mouse), this protein is SMC5-SMC6 complex localization factor protein 1.